A 554-amino-acid polypeptide reads, in one-letter code: Undecaprenyl phosphate-alpha-4-amino-4-deoxy-L-arabinose arabinosyl transferase (554 aa).

The next 11 membrane-spanning stretches (helical) occupy residues 4 to 24, 87 to 107, 115 to 135, 178 to 198, 206 to 226, 262 to 282, 293 to 313, 315 to 335, 351 to 371, 384 to 404, and 414 to 434; these read LKDSGAALLALFFVLVYLLPV, FGSIFSTALSAVLVYWLATLL, VLATLIYLSFLLVFGIGTYAV, FMTKGFLALAVPVIAVLPIVI, LVVFGPIAIVCAVLLSLPWAL, YLPILCIGVLPWLGLLPGALF, ELFFLLSWVVMPLLFFSVAKG, LPTYILPCMAPLSLLMAAYAT, VINLLFGVACALVIVVIGLGL, QKVWLGVLAFAGWGVTGFITL, and AAACPLLFILLVGYLIPQQVV.

This sequence belongs to the glycosyltransferase 83 family.

The protein resides in the cell inner membrane. It catalyses the reaction 4-amino-4-deoxy-alpha-L-arabinopyranosyl di-trans,octa-cis-undecaprenyl phosphate + lipid IVA = lipid IIA + di-trans,octa-cis-undecaprenyl phosphate.. The protein operates within lipopolysaccharide metabolism; 4-amino-4-deoxy-beta-L-arabinose-lipid A biosynthesis. In terms of biological role, catalyzes the transfer of the L-Ara4N moiety of the glycolipid undecaprenyl phosphate-alpha-L-Ara4N to lipid A. The modified arabinose is attached to lipid A and is required for resistance to polymyxin and cationic antimicrobial peptides. The protein is Undecaprenyl phosphate-alpha-4-amino-4-deoxy-L-arabinose arabinosyl transferase of Yersinia pseudotuberculosis serotype O:1b (strain IP 31758).